Consider the following 504-residue polypeptide: Arabinose import ATP-binding protein AraG (504 aa).

ABC transporter domains follow at residues L8–R243 and Y256–V499. G40–S47 contributes to the ATP binding site.

This sequence belongs to the ABC transporter superfamily. Arabinose importer (TC 3.A.1.2.2) family. In terms of assembly, the complex is composed of two ATP-binding proteins (AraG), two transmembrane proteins (AraH) and a solute-binding protein (AraF).

The protein localises to the cell inner membrane. It catalyses the reaction L-arabinose(out) + ATP + H2O = L-arabinose(in) + ADP + phosphate + H(+). Functionally, part of the ABC transporter complex AraFGH involved in arabinose import. Responsible for energy coupling to the transport system. This chain is Arabinose import ATP-binding protein AraG, found in Shigella dysenteriae serotype 1 (strain Sd197).